Here is a 113-residue protein sequence, read N- to C-terminus: Large ribosomal subunit protein uL22 (113 aa).

This sequence belongs to the universal ribosomal protein uL22 family. In terms of assembly, part of the 50S ribosomal subunit.

This protein binds specifically to 23S rRNA; its binding is stimulated by other ribosomal proteins, e.g. L4, L17, and L20. It is important during the early stages of 50S assembly. It makes multiple contacts with different domains of the 23S rRNA in the assembled 50S subunit and ribosome. Functionally, the globular domain of the protein is located near the polypeptide exit tunnel on the outside of the subunit, while an extended beta-hairpin is found that lines the wall of the exit tunnel in the center of the 70S ribosome. The protein is Large ribosomal subunit protein uL22 of Roseiflexus castenholzii (strain DSM 13941 / HLO8).